The sequence spans 163 residues: Putative 4-hydroxy-4-methyl-2-oxoglutarate aldolase (163 aa).

Substrate-binding positions include 75–78 and arginine 97; that span reads GDQL. An a divalent metal cation-binding site is contributed by aspartate 98.

This sequence belongs to the class II aldolase/RraA-like family. In terms of assembly, homotrimer. The cofactor is a divalent metal cation.

It catalyses the reaction 4-hydroxy-4-methyl-2-oxoglutarate = 2 pyruvate. The enzyme catalyses oxaloacetate + H(+) = pyruvate + CO2. Its function is as follows. Catalyzes the aldol cleavage of 4-hydroxy-4-methyl-2-oxoglutarate (HMG) into 2 molecules of pyruvate. Also contains a secondary oxaloacetate (OAA) decarboxylase activity due to the common pyruvate enolate transition state formed following C-C bond cleavage in the retro-aldol and decarboxylation reactions. In Photobacterium profundum (strain SS9), this protein is Putative 4-hydroxy-4-methyl-2-oxoglutarate aldolase.